The chain runs to 180 residues: UPF0227 protein CKO_01948 (180 aa).

The protein belongs to the UPF0227 family.

This Citrobacter koseri (strain ATCC BAA-895 / CDC 4225-83 / SGSC4696) protein is UPF0227 protein CKO_01948.